A 305-amino-acid polypeptide reads, in one-letter code: Sulfate adenylyltransferase subunit 2 (305 aa).

The interval 283-305 (RQGRVIDHDQSASMEKKKQEGYF) is disordered.

It belongs to the PAPS reductase family. CysD subfamily. As to quaternary structure, heterodimer composed of CysD, the smaller subunit, and CysN.

It catalyses the reaction sulfate + ATP + H(+) = adenosine 5'-phosphosulfate + diphosphate. Its pathway is sulfur metabolism; hydrogen sulfide biosynthesis; sulfite from sulfate: step 1/3. Functionally, with CysN forms the ATP sulfurylase (ATPS) that catalyzes the adenylation of sulfate producing adenosine 5'-phosphosulfate (APS) and diphosphate, the first enzymatic step in sulfur assimilation pathway. APS synthesis involves the formation of a high-energy phosphoric-sulfuric acid anhydride bond driven by GTP hydrolysis by CysN coupled to ATP hydrolysis by CysD. This Caulobacter sp. (strain K31) protein is Sulfate adenylyltransferase subunit 2.